The following is a 185-amino-acid chain: ATP-dependent protease subunit HslV (185 aa).

Residue Thr2 is part of the active site. Positions 157, 160, and 163 each coordinate Na(+).

It belongs to the peptidase T1B family. HslV subfamily. A double ring-shaped homohexamer of HslV is capped on each side by a ring-shaped HslU homohexamer. The assembly of the HslU/HslV complex is dependent on binding of ATP.

Its subcellular location is the cytoplasm. It catalyses the reaction ATP-dependent cleavage of peptide bonds with broad specificity.. Its activity is regulated as follows. Allosterically activated by HslU binding. Functionally, protease subunit of a proteasome-like degradation complex believed to be a general protein degrading machinery. The chain is ATP-dependent protease subunit HslV from Idiomarina loihiensis (strain ATCC BAA-735 / DSM 15497 / L2-TR).